The following is a 93-amino-acid chain: Insertion element ISR1 uncharacterized 11 kDa protein A1 (93 aa).

Disordered stretches follow at residues Arg14–Arg33 and Arg68–Arg93.

In Rhizobium sp, this protein is Insertion element ISR1 uncharacterized 11 kDa protein A1.